The primary structure comprises 229 residues: MAKKKAFTPLLYFASIVFLPWWISLSFTKSMESWVTNWWNTGQSEIFLNDIQEKSILERFIELEEILLLDEMIKEHSETRLQKLGIGIHKETIQLIKIQNEDRIHTILHLSTNIISFVILSGYSIFGNEELVILNSLAQEFLYNLSDTVKAFSILLLTDLCIGFHSPRGWELMIGSVYKDFGFVHNDQMISGLVSTFPVILDTLLKYWIFRYLNRVSPSLVVIYHSMND.

3 helical membrane-spanning segments follow: residues 7-27, 114-134, and 190-210; these read FTPL…SLSF, IISF…LVIL, and ISGL…YWIF.

Belongs to the CemA family.

The protein localises to the plastid. It localises to the chloroplast inner membrane. The enzyme catalyses K(+)(in) + H(+)(out) = K(+)(out) + H(+)(in). Functionally, contributes to K(+)/H(+) antiport activity by supporting proton efflux to control proton extrusion and homeostasis in chloroplasts in a light-dependent manner to modulate photosynthesis. Prevents excessive induction of non-photochemical quenching (NPQ) under continuous-light conditions. Indirectly promotes efficient inorganic carbon uptake into chloroplasts. This Jasminum nudiflorum (Winter jasmine) protein is Potassium/proton antiporter CemA.